Here is a 60-residue protein sequence, read N- to C-terminus: Cytotoxin 5 (60 aa).

4 disulfides stabilise this stretch: cysteine 3–cysteine 21, cysteine 14–cysteine 38, cysteine 42–cysteine 53, and cysteine 54–cysteine 59.

The protein belongs to the three-finger toxin family. Short-chain subfamily. Type IA cytotoxin sub-subfamily. In terms of assembly, monomer in solution; Homodimer and oligomer in the presence of negatively charged lipids forming a pore with a size ranging between 20 and 30 Angstroms. In terms of tissue distribution, expressed by the venom gland.

It is found in the secreted. The protein resides in the target cell membrane. In terms of biological role, basic protein that binds to cell membrane and depolarizes cardiomyocytes. It also possesses lytic activity on many other cells, including red blood cells. Interaction with sulfatides in the cell membrane induces pore formation and cell internalization and is responsible for cytotoxicity in cardiomyocytes. It targets the mitochondrial membrane and induces mitochondrial swelling and fragmentation. Inhibits protein kinases C. It binds to the integrin alpha-V/beta-3 with a moderate affinity. Is cardiotoxic and cytocidal to Yoshida sarcoma cells. This Naja atra (Chinese cobra) protein is Cytotoxin 5.